The primary structure comprises 1926 residues: Rho GTPase-activating protein 21-A (1926 aa).

Residues 1–41 (MATRRAIVPEQQQEPSSPASEISKNKDGQEQSEMVSPMEEE) are disordered. Over residues 10 to 22 (EQQQEPSSPASEI) the composition is skewed to polar residues. Residues 77–162 (HTSIKDEENG…TLELSVMPKD (86 aa)) enclose the PDZ domain. Disordered stretches follow at residues 211–236 (VEVP…TTQP), 353–378 (PTAQ…QIDW), 416–487 (TDYN…RSES), 571–592 (QPTR…DRSG), 640–704 (FQRK…DSDA), and 868–905 (GKLG…DVFS). Composition is skewed to polar residues over residues 216–236 (SGTS…TTQP), 353–372 (PTAQ…SPGP), and 416–429 (TDYN…FSGQ). A compositionally biased stretch (low complexity) spans 441–451 (QQSVQMRQRSV). A compositionally biased stretch (basic and acidic residues) spans 452 to 466 (SQERLEDPVLMKEWP). Over residues 468 to 479 (SASQDTLSSAVA) the composition is skewed to polar residues. The segment covering 640–669 (FQRKTQTESASGFQLDSVKTSMSASSSPPA) has biased composition (polar residues). Residues 906–1019 (DSNKEGFLYF…WIKAIQENGN (114 aa)) form the PH domain. Polar residues predominate over residues 1044–1064 (MSSASNKSEQSPKAPRQTLSI). The disordered stretch occupies residues 1044 to 1107 (MSSASNKSEQ…SPPKDKGSWR (64 aa)). Positions 1083 to 1105 (PKQESERRLFSKDDISPPKDKGS) are enriched in basic and acidic residues. One can recognise a Rho-GAP domain in the interval 1126 to 1318 (VRLDDCPPAH…TLIQKHDWFF (193 aa)). Disordered stretches follow at residues 1330 to 1381 (VHEE…SGKD), 1396 to 1416 (ASRK…EDEL), 1512 to 1540 (QMEE…PKVV), 1573 to 1598 (LDPN…DERS), 1626 to 1658 (RQHR…TPRL), and 1827 to 1915 (STSE…LSGT). Residues 1512–1534 (QMEESMSDSGTMLSNSSQASAQR) are compositionally biased toward polar residues. 2 stretches are compositionally biased toward polar residues: residues 1639-1653 (VQAN…TEGS) and 1866-1902 (TADI…NNFS).

It is found in the golgi apparatus membrane. The protein localises to the cell junction. It localises to the cytoplasmic vesicle membrane. Its subcellular location is the cytoplasm. The protein resides in the cytoskeleton. GTPase-activating protein (GAP) for rhoa and cdc42. This chain is Rho GTPase-activating protein 21-A (arhgap21-a), found in Xenopus laevis (African clawed frog).